We begin with the raw amino-acid sequence, 615 residues long: Medium-chain acyl-CoA ligase ACSF2, mitochondrial (615 aa).

The N-terminal 42 residues, 1-42 (MAVYVGMLRVARLCARSPRVLGARVGLSRVWQEARLWGVRPL), are a transit peptide targeting the mitochondrion. The residue at position 179 (K179) is an N6-acetyllysine. Position 182 is an N6-acetyllysine; alternate (K182). K182 is modified (N6-succinyllysine; alternate). K199 carries the post-translational modification N6-acetyllysine. 263-271 (TSGTTGSPK) is a binding site for ATP. Residues K340 and K398 each carry the N6-acetyllysine modification. At K478 the chain carries N6-succinyllysine. 2 residues coordinate ATP: D493 and R508. K510 is subject to N6-acetyllysine. Residues K544 and K570 each carry the N6-acetyllysine; alternate modification. N6-succinyllysine; alternate occurs at positions 544 and 570. K599 is an ATP binding site. K599 is modified (N6-succinyllysine).

The protein belongs to the ATP-dependent AMP-binding enzyme family.

It is found in the mitochondrion. The catalysed reaction is a medium-chain fatty acid + ATP + CoA = a medium-chain fatty acyl-CoA + AMP + diphosphate. It carries out the reaction octanoate + ATP + CoA = octanoyl-CoA + AMP + diphosphate. Its function is as follows. Acyl-CoA synthases catalyze the initial reaction in fatty acid metabolism, by forming a thioester with CoA. Has some preference toward medium-chain substrates. Plays a role in adipocyte differentiation. The polypeptide is Medium-chain acyl-CoA ligase ACSF2, mitochondrial (Bos taurus (Bovine)).